The chain runs to 400 residues: uncharacterized protein (400 aa).

A compositionally biased stretch (basic and acidic residues) spans 112-126 (SESTAQIEKKPRKPL). A disordered region spans residues 112–151 (SESTAQIEKKPRKPLDSVGLLEGDRNKRKKSPQMNDFNIK).

This is an uncharacterized protein from Homo sapiens (Human).